The following is a 464-amino-acid chain: Agamous-like MADS-box protein AGL92 (464 aa).

Residues 1–60 form the MADS-box domain; sequence MRTKTKLVLIPDRHFRRATFRKRNAGIRKKLHELTTLCDIKACAVIYSPFENPTVWPSTE. Residues 85–114 adopt a coiled-coil conformation; sequence ETFLRDQITKEQNKLESLRRENRETQLKHF. Residues 443-464 form a disordered region; the sequence is TSTGHMPSTTTTTTNNNNNNNV. Residues 451–464 are compositionally biased toward low complexity; the sequence is TTTTTTNNNNNNNV.

In terms of assembly, interacts with AGL62.

Its subcellular location is the nucleus. Functionally, putative transcription factor. This chain is Agamous-like MADS-box protein AGL92 (AGL92), found in Arabidopsis thaliana (Mouse-ear cress).